The primary structure comprises 502 residues: Cytochrome P450 3A40 (502 aa).

C443 serves as a coordination point for heme.

The protein belongs to the cytochrome P450 family. Heme is required as a cofactor.

The protein localises to the endoplasmic reticulum membrane. The protein resides in the microsome membrane. It carries out the reaction an organic molecule + reduced [NADPH--hemoprotein reductase] + O2 = an alcohol + oxidized [NADPH--hemoprotein reductase] + H2O + H(+). This is Cytochrome P450 3A40 (cyp3a40) from Oryzias latipes (Japanese rice fish).